A 78-amino-acid polypeptide reads, in one-letter code: Chondrosarcoma-associated gene 1 protein (78 aa).

The first 19 residues, 1 to 19 (MSATTACWPAFTVLGEARG), serve as a signal peptide directing secretion. A disordered region spans residues 35–78 (KMSRKPRASSPFSNNHPSTPKRFPRQPRREKGPVKEVPGTKGSP).

As to expression, expressed in chondrosarcoma, melanoma, cartilage and testis, but not in other normal tissues.

The protein localises to the cytoplasm. It is found in the cytoskeleton. The protein resides in the microtubule organizing center. It localises to the centrosome. Its subcellular location is the spindle pole. Its function is as follows. May play an important role in maintaining centrosome integrity during mitosis. The sequence is that of Chondrosarcoma-associated gene 1 protein from Homo sapiens (Human).